The primary structure comprises 364 residues: MSDARKGPDEADDSQCDSGIESLRSLRSLPEPTAAPGSGSSQSGCPQPWRHAPETHKEPEKEDADGERADSTYASSSLTESFPLLERPEAKDPSPPAPGSPLPPAGVLSPQQLEALTYISEDGDTLLHLAVIHEAPSVLFCCLAFLPQEVLDIQNNLYQTALHLAVHLDQPDVVRALVLKGASRILQDQHGDTALHVACRRQNLACACCLLEEQPEPGRQLSHPLDLQLKNWQGLACLHIATLQRNQPLIELLLQNGADIDVQEGTSGKTALHLAVETQERSLVQFLLQAGARVDARMLNGCTPLHLAAGRGLNSISSTLCEAGADSLLLNVEDETPQDLAEDLLSYLPFDDLKISGKPLLCTD.

Positions 1–108 (MSDARKGPDE…GSPLPPAGVL (108 aa)) are disordered. Position 18 is a phosphoserine (S18). Low complexity predominate over residues 36 to 48 (PGSGSSQSGCPQP). The span at 51–70 (HAPETHKEPEKEDADGERAD) shows a compositional bias: basic and acidic residues. A compositionally biased stretch (pro residues) spans 93-104 (PSPPAPGSPLPP). 6 ANK repeats span residues 122–155 (DGDTLLHLAVIHEAPSVLFCCLAFLPQEVLDIQN), 157–186 (LYQTALHLAVHLDQPDVVRALVLKGASRIL), 190–219 (HGDTALHVACRRQNLACACCLLEEQPEPGR), 233–262 (QGLACLHIATLQRNQPLIELLLQNGADIDV), 267–296 (SGKTALHLAVETQERSLVQFLLQAGARVDA), and 300–329 (NGCTPLHLAAGRGLNSISSTLCEAGADSLL).

This sequence belongs to the NF-kappa-B inhibitor family. Interacts with RELA, REL, NFKB1 nuclear factor NF-kappa-B p50 subunit and NFKB2 nuclear factor NF-kappa-B p52 subunit. Interacts with HNRNPA2B1; the interaction may be mediated by the RRM2 domain of HNRNPA2B1, and HNRNPA2B1 may interact simultaneously with FAM76B and either NFKBIA or NFKBIE to form a complex. Post-translationally, serine phosphorylated; followed by proteasome-dependent degradation.

It is found in the cytoplasm. Sequesters NF-kappa-B transcription factor complexes in the cytoplasm, thereby inhibiting their activity. Sequestered complexes include NFKB1/p50-RELA/p65 and NFKB1/p50-REL/c-Rel complexes. Limits B-cell activation in response to pathogens, and also plays an important role in B-cell development. The polypeptide is NF-kappa-B inhibitor epsilon (Nfkbie) (Mus musculus (Mouse)).